Consider the following 96-residue polypeptide: Carboxysome shell protein CsoS1A (96 aa).

In terms of domain architecture, BMC spans 7 to 92; the sequence is ALGMIETRGL…PHKEVEPVLT (86 aa).

It belongs to the bacterial microcompartments protein family. CsoS1 subfamily. In terms of assembly, homohexamer with a small central pore. Forms a CsoS2-CsoS1-RuBisCO complex.

The protein resides in the carboxysome. One of shell proteins of the carboxysome, a polyhedral inclusion where RuBisCO (ribulose bisphosphate carboxylase, ccbL-ccbS) is sequestered. Assembles into hexamers which make sheets that form the facets of the polyhedral carboxysome. The shell probably limits the diffusion of CO(2) into and out of the carboxysome. The chain is Carboxysome shell protein CsoS1A from Hydrogenovibrio crunogenus (strain DSM 25203 / XCL-2) (Thiomicrospira crunogena).